A 453-amino-acid chain; its full sequence is Bis(5'-adenosyl)-triphosphatase ENPP4 (453 aa).

The first 18 residues, 1–18 (MKLLLMLLFSGLMTGCRG), serve as a signal peptide directing secretion. Over 19 to 407 (NSSSASPPKL…DQWCINLPEA (389 aa)) the chain is Extracellular. Residues D34 and T70 each coordinate Zn(2+). T70 serves as the catalytic AMP-threonine intermediate. Positions 91 and 154 each coordinate substrate. Residue N166 is glycosylated (N-linked (GlcNAc...) asparagine). 4 residues coordinate Zn(2+): D189, H193, D237, and H238. D189 is a substrate binding site. A disulfide bridge connects residues C254 and C287. An N-linked (GlcNAc...) asparagine glycan is attached at N276. H336 is a Zn(2+) binding site. C394 and C401 form a disulfide bridge. The chain crosses the membrane as a helical span at residues 408–428 (IGIVIGALLVLTTLTCLIIIM). Over 429–453 (QNRVSGPRPFSRLQLQEDDDDPLIG) the chain is Cytoplasmic.

Belongs to the nucleotide pyrophosphatase/phosphodiesterase family. Zn(2+) is required as a cofactor.

Its subcellular location is the cell membrane. The catalysed reaction is P(1),P(3)-bis(5'-adenosyl) triphosphate + H2O = AMP + ADP + 2 H(+). Hydrolyzes extracellular Ap3A into AMP and ADP, and Ap4A into AMP and ATP. Ap3A and Ap4A are diadenosine polyphosphates thought to induce proliferation of vascular smooth muscle cells. Acts as a procoagulant, mediating platelet aggregation at the site of nascent thrombus via release of ADP from Ap3A and activation of ADP receptors. This Bos taurus (Bovine) protein is Bis(5'-adenosyl)-triphosphatase ENPP4 (ENPP4).